We begin with the raw amino-acid sequence, 291 residues long: MKTLLILTILAMAITIATANMQADPSGQVQWPQQQPFLQPHQPFSQQPQQIFPQPQQTFPHQPQQQFPQPQQPQQQFLQPRQPFPQQPQQPYPQQPQQPFPQTQQPQQPFPQSKQPQQPFPQPQQPQQSFPQQQPSLIQQSLQQQLNPCKNFLLQQCKPVSLVSSLWSIILPPSDCQVMRQQCCQQLAQIPQQLQCAAIHSVVHSIIMQQEQQEQLQGVQILVPLSQQQQVGQGILVQGQGIIQPQQPAQLEVIRSLVLQTLPTMCNVYVPPYCSTIRAPFASIVASIGGQ.

Positions 1–19 (MKTLLILTILAMAITIATA) are cleaved as a signal peptide. Low complexity predominate over residues 38 to 81 (LQPHQPFSQQPQQIFPQPQQTFPHQPQQQFPQPQQPQQQFLQPR). A disordered region spans residues 38 to 137 (LQPHQPFSQQ…QSFPQQQPSL (100 aa)). Residues 82–99 (QPFPQQPQQPYPQQPQQP) show a composition bias toward pro residues. Composition is skewed to low complexity over residues 100 to 117 (FPQTQQPQQPFPQSKQPQ) and 125 to 137 (QPQQSFPQQQPSL).

The protein belongs to the gliadin/glutenin family.

Gliadin is the major seed storage protein in wheat. The polypeptide is Gamma-gliadin B (Triticum aestivum (Wheat)).